Here is a 322-residue protein sequence, read N- to C-terminus: Tlg2p-like protein a (322 aa).

Residues 1–301 (MATRNRTLLF…QRHGGMVKCA (301 aa)) lie on the Cytoplasmic side of the membrane. Residues 116-146 (KEDQHNIESLTQEITFLLKKSEKQLQRLSAS) adopt a coiled-coil conformation. The t-SNARE coiled-coil homology domain maps to 226–288 (EEVSVEREKE…EDGLKQLQKA (63 aa)). A helical; Anchor for type IV membrane protein membrane pass occupies residues 302 to 322 (SVLVILCFIMLLLLILKEIFL).

This sequence belongs to the syntaxin family. As to quaternary structure, interacts with VTI12 and SYP61 to form a t-SNARE complex and with VPS45. Interacts with TNO1. Binds to YKT61 and YKT62. Core constituent of the SNARE complex required for membrane fusion at the trans-Golgi network. Mostly expressed in flowers, to a lower extent in leaves and roots, and, at low levels, in stems.

It localises to the golgi apparatus. It is found in the trans-Golgi network membrane. Its function is as follows. Contributes to the regulation of secretory and vacuolar transport pathways in the post-Golgi network, and to the maintenance of the Golgi apparatus and trans-Golgi network (TGN) morphologies. Together with VTI12, required for membrane fusion. Vesicle trafficking protein that functions in the secretory pathway and mediates liposome fusion; the fusion of phospholipid vesicles containing SYP41 and VTI12 is triggered by YKT61 and YKT62. Required for extracellular resistance responses to a fungal pathogen. Also involved in the protection of chloroplasts from salicylic acid-dependent biotic stress. This is Tlg2p-like protein a from Arabidopsis thaliana (Mouse-ear cress).